Consider the following 175-residue polypeptide: Cytochrome c homolog (175 aa).

The Cytoplasmic segment spans residues 1–8 (MTGKELNK). Residues 9 to 29 (IVAAILFASLIAMIVRFVANI) form a helical; Signal-anchor membrane-spanning segment. Topologically, residues 30 to 175 (LYKPNLQVLN…LFLKNYVHDK (146 aa)) are periplasmic. Cys84, Cys87, His88, and Met150 together coordinate heme c.

It belongs to the cytochrome c family. Post-translationally, binds 1 heme c group covalently per subunit.

Its subcellular location is the cell membrane. May be involved in electron transfer from bc1 complex to aa3. The protein is Cytochrome c homolog (cycM) of Rickettsia typhi (strain ATCC VR-144 / Wilmington).